The sequence spans 227 residues: ATP-dependent Clp protease proteolytic subunit 1 (227 aa).

Ser-124 functions as the Nucleophile in the catalytic mechanism. The active site involves His-149.

The protein belongs to the peptidase S14 family. Fourteen ClpP subunits assemble into 2 heptameric rings which stack back to back to give a disk-like structure with a central cavity, resembling the structure of eukaryotic proteasomes.

It is found in the cytoplasm. The enzyme catalyses Hydrolysis of proteins to small peptides in the presence of ATP and magnesium. alpha-casein is the usual test substrate. In the absence of ATP, only oligopeptides shorter than five residues are hydrolyzed (such as succinyl-Leu-Tyr-|-NHMec, and Leu-Tyr-Leu-|-Tyr-Trp, in which cleavage of the -Tyr-|-Leu- and -Tyr-|-Trp bonds also occurs).. In terms of biological role, cleaves peptides in various proteins in a process that requires ATP hydrolysis. Has a chymotrypsin-like activity. Plays a major role in the degradation of misfolded proteins. This Rhodopirellula baltica (strain DSM 10527 / NCIMB 13988 / SH1) protein is ATP-dependent Clp protease proteolytic subunit 1.